The sequence spans 192 residues: Imidazoleglycerol-phosphate dehydratase (192 aa).

The protein belongs to the imidazoleglycerol-phosphate dehydratase family.

The protein localises to the cytoplasm. It carries out the reaction D-erythro-1-(imidazol-4-yl)glycerol 3-phosphate = 3-(imidazol-4-yl)-2-oxopropyl phosphate + H2O. Its pathway is amino-acid biosynthesis; L-histidine biosynthesis; L-histidine from 5-phospho-alpha-D-ribose 1-diphosphate: step 6/9. The polypeptide is Imidazoleglycerol-phosphate dehydratase (Methanocella arvoryzae (strain DSM 22066 / NBRC 105507 / MRE50)).